Here is a 114-residue protein sequence, read N- to C-terminus: MSQKNGIATLLQAEKEAHEIVSKARKYRQDKLKQAKTDAAKEIDSYKIQKDKELKEFEQKNAGGVGELEKKAEAGVQGELAEIKKIAEKKKDDVVKILIETVIKPSAEVHINAL.

Ser2 bears the N-acetylserine mark.

Belongs to the V-ATPase G subunit family. V-ATPase is a heteromultimeric enzyme composed of a peripheral catalytic V1 complex (components A to H) attached to an integral membrane V0 proton pore complex (components: a, c, c', c'', d, e, f and VOA1).

The protein resides in the vacuole membrane. Functionally, subunit of the V1 complex of vacuolar(H+)-ATPase (V-ATPase), a multisubunit enzyme composed of a peripheral complex (V1) that hydrolyzes ATP and a membrane integral complex (V0) that translocates protons. V-ATPase is responsible for acidifying and maintaining the pH of intracellular compartments. The sequence is that of V-type proton ATPase subunit G from Saccharomyces cerevisiae (strain ATCC 204508 / S288c) (Baker's yeast).